The sequence spans 299 residues: Glycine--tRNA ligase alpha subunit (299 aa).

It belongs to the class-II aminoacyl-tRNA synthetase family. In terms of assembly, tetramer of two alpha and two beta subunits.

Its subcellular location is the cytoplasm. The enzyme catalyses tRNA(Gly) + glycine + ATP = glycyl-tRNA(Gly) + AMP + diphosphate. This chain is Glycine--tRNA ligase alpha subunit (glyQ), found in Synechocystis sp. (strain ATCC 27184 / PCC 6803 / Kazusa).